We begin with the raw amino-acid sequence, 188 residues long: MSATETKYVPRLYKKYKEEVVPKLIQKFQYKNPMQVPRLVKIVVNMGVGEAVQDIKQLERAVEDLRAITGQQPMITRARKSKAGFKLRKGMPIGCKVTLRNHTMWDFLDKVISVALPRVKDFKGLNPRSFDGRGNYAFGIAEQIVFPEIDYDKVDRIRGMDIIINTTAVSDQESLLATLTLGLPIRAM.

The protein belongs to the universal ribosomal protein uL5 family. In terms of assembly, part of the 50S ribosomal subunit; part of the 5S rRNA/L5/L18/L25 subcomplex. Contacts the 5S rRNA and the P site tRNA. Forms a bridge to the 30S subunit in the 70S ribosome.

This is one of the proteins that bind and probably mediate the attachment of the 5S RNA into the large ribosomal subunit, where it forms part of the central protuberance. In the 70S ribosome it contacts protein S13 of the 30S subunit (bridge B1b), connecting the 2 subunits; this bridge is implicated in subunit movement. Contacts the P site tRNA; the 5S rRNA and some of its associated proteins might help stabilize positioning of ribosome-bound tRNAs. In Aquifex pyrophilus, this protein is Large ribosomal subunit protein uL5.